We begin with the raw amino-acid sequence, 443 residues long: 23S rRNA (uracil(1939)-C(5))-methyltransferase RlmD (443 aa).

Positions 8-66 (KPLPAEPIAAHIESFAHDGKGIAHVDGRVVFVDGALPGEDVTFVYTEIKRDYAAGRVVE) constitute a TRAM domain. Cys79, Cys85, Cys88, and Cys167 together coordinate [4Fe-4S] cluster. Positions 276, 305, 310, 326, 353, and 374 each coordinate S-adenosyl-L-methionine. The active-site Nucleophile is Cys400.

Belongs to the class I-like SAM-binding methyltransferase superfamily. RNA M5U methyltransferase family. RlmD subfamily.

The enzyme catalyses uridine(1939) in 23S rRNA + S-adenosyl-L-methionine = 5-methyluridine(1939) in 23S rRNA + S-adenosyl-L-homocysteine + H(+). Catalyzes the formation of 5-methyl-uridine at position 1939 (m5U1939) in 23S rRNA. The sequence is that of 23S rRNA (uracil(1939)-C(5))-methyltransferase RlmD from Methylococcus capsulatus (strain ATCC 33009 / NCIMB 11132 / Bath).